The primary structure comprises 347 residues: Methylthioribose-1-phosphate isomerase (347 aa).

Substrate is bound by residues 45 to 47 (RGA), Arg88, and Gln197. Asp238 serves as the catalytic Proton donor. 248-249 (NK) contacts substrate.

This sequence belongs to the eIF-2B alpha/beta/delta subunits family. MtnA subfamily.

The enzyme catalyses 5-(methylsulfanyl)-alpha-D-ribose 1-phosphate = 5-(methylsulfanyl)-D-ribulose 1-phosphate. It participates in amino-acid biosynthesis; L-methionine biosynthesis via salvage pathway; L-methionine from S-methyl-5-thio-alpha-D-ribose 1-phosphate: step 1/6. Functionally, catalyzes the interconversion of methylthioribose-1-phosphate (MTR-1-P) into methylthioribulose-1-phosphate (MTRu-1-P). This Trichormus variabilis (strain ATCC 29413 / PCC 7937) (Anabaena variabilis) protein is Methylthioribose-1-phosphate isomerase.